Reading from the N-terminus, the 124-residue chain is Small ribosomal subunit protein uS12 (124 aa).

Position 89 is a 3-methylthioaspartic acid (Asp-89). The residue at position 108 (Lys-108) is an N6-acetyllysine.

Belongs to the universal ribosomal protein uS12 family. Part of the 30S ribosomal subunit. Contacts proteins S8 and S17. May interact with IF1 in the 30S initiation complex.

Functionally, with S4 and S5 plays an important role in translational accuracy. Interacts with and stabilizes bases of the 16S rRNA that are involved in tRNA selection in the A site and with the mRNA backbone. Located at the interface of the 30S and 50S subunits, it traverses the body of the 30S subunit contacting proteins on the other side and probably holding the rRNA structure together. The combined cluster of proteins S8, S12 and S17 appears to hold together the shoulder and platform of the 30S subunit. The chain is Small ribosomal subunit protein uS12 from Escherichia coli O6:K15:H31 (strain 536 / UPEC).